Reading from the N-terminus, the 725-residue chain is 1,4-alpha-glucan branching enzyme GlgB (725 aa).

Asp406 acts as the Nucleophile in catalysis. Glu459 (proton donor) is an active-site residue.

Belongs to the glycosyl hydrolase 13 family. GlgB subfamily. In terms of assembly, monomer.

The enzyme catalyses Transfers a segment of a (1-&gt;4)-alpha-D-glucan chain to a primary hydroxy group in a similar glucan chain.. The protein operates within glycan biosynthesis; glycogen biosynthesis. In terms of biological role, catalyzes the formation of the alpha-1,6-glucosidic linkages in glycogen by scission of a 1,4-alpha-linked oligosaccharide from growing alpha-1,4-glucan chains and the subsequent attachment of the oligosaccharide to the alpha-1,6 position. This chain is 1,4-alpha-glucan branching enzyme GlgB, found in Methylobacillus flagellatus (strain ATCC 51484 / DSM 6875 / VKM B-1610 / KT).